The following is a 345-amino-acid chain: Methionine import ATP-binding protein MetN (345 aa).

The ABC transporter domain maps to 2–241 (IKLKNISKVF…PKTLLAQEFI (240 aa)). 38–45 (GASGAGKS) provides a ligand contact to ATP.

This sequence belongs to the ABC transporter superfamily. Methionine importer (TC 3.A.1.24) family. The complex is composed of two ATP-binding proteins (MetN), two transmembrane proteins (MetI) and a solute-binding protein (MetQ).

The protein localises to the cell inner membrane. It catalyses the reaction L-methionine(out) + ATP + H2O = L-methionine(in) + ADP + phosphate + H(+). It carries out the reaction D-methionine(out) + ATP + H2O = D-methionine(in) + ADP + phosphate + H(+). In terms of biological role, part of the ABC transporter complex MetNIQ involved in methionine import. Responsible for energy coupling to the transport system. In Histophilus somni (strain 129Pt) (Haemophilus somnus), this protein is Methionine import ATP-binding protein MetN.